The following is a 360-amino-acid chain: NADH-quinone oxidoreductase subunit H (360 aa).

The next 8 membrane-spanning stretches (helical) occupy residues 20-40 (GMVWPVLWILLKIVALLIPLM), 95-115 (GLFVLGPVMAIMPALAAWVVI), 130-150 (LLLVMAITSIEVYGVIIAGWA), 176-196 (FCLLIVIMVSGSMNLTEIVLA), 206-226 (GIGFLSWNWLPLLPVFLVYLI), 261-281 (IFFLAEYASMWLVSILAALMF), 297-317 (IPGWIWLGIKTCLVVSMFIWI), and 336-356 (IFIPVTLACLLIAGGWLLSPW).

It belongs to the complex I subunit 1 family. In terms of assembly, NDH-1 is composed of 14 different subunits. Subunits NuoA, H, J, K, L, M, N constitute the membrane sector of the complex.

Its subcellular location is the cell inner membrane. It catalyses the reaction a quinone + NADH + 5 H(+)(in) = a quinol + NAD(+) + 4 H(+)(out). Functionally, NDH-1 shuttles electrons from NADH, via FMN and iron-sulfur (Fe-S) centers, to quinones in the respiratory chain. The immediate electron acceptor for the enzyme in this species is believed to be ubiquinone. Couples the redox reaction to proton translocation (for every two electrons transferred, four hydrogen ions are translocated across the cytoplasmic membrane), and thus conserves the redox energy in a proton gradient. This subunit may bind ubiquinone. The polypeptide is NADH-quinone oxidoreductase subunit H (Verminephrobacter eiseniae (strain EF01-2)).